Consider the following 151-residue polypeptide: Large ribosomal subunit protein uL15 (151 aa).

The disordered stretch occupies residues 37 to 57; it reads GMRGQKSRSGRPTRPGFEGGQ.

The protein belongs to the universal ribosomal protein uL15 family. As to quaternary structure, part of the 50S ribosomal subunit.

Binds to the 23S rRNA. The sequence is that of Large ribosomal subunit protein uL15 from Prochlorococcus marinus (strain MIT 9313).